The primary structure comprises 538 residues: Transmembrane protein 266 (538 aa).

Residues 1–102 (MALVTSFNMA…VFLLSASLNS (102 aa)) are Cytoplasmic-facing. A helical transmembrane segment spans residues 103 to 123 (FLVACVILVVILLTLELLIDT). The Extracellular portion of the chain corresponds to 124 to 130 (KLLQFSN). The helical transmembrane segment at 131-151 (AFQFAGVIHWISLVILSVFFS) threads the bilayer. At 152 to 169 (ETVLRIVVLGIWDYIENK) the chain is on the cytoplasmic side. Residues 170-190 (IEVFDGAVIILSLAPMVASTV) traverse the membrane as a helical segment. Over 191–199 (ANGPRSPWD) the chain is Extracellular. The helical transmembrane segment at 200-220 (AISLIIMFRIWRVKRVIDAYV) threads the bilayer. At 221-538 (LPVKLEMEMV…EPKLHTVPEA (318 aa)) the chain is on the cytoplasmic side. Positions 232–278 (QQYEKAKAIQDEQLERLTQICQEQGFEIRQLRAHLAQQDLDLAAERE) form a coiled coil. 2 disordered regions span residues 380-435 (NSTC…PLPL) and 453-483 (SSLS…VQTS). Residues 381–396 (STCASATSETTSHSTC) show a composition bias toward low complexity. A compositionally biased stretch (polar residues) spans 397-417 (GSVTRAQSASSQTLGSSTDCS). The span at 425-434 (PSKPRSSPLP) shows a compositional bias: low complexity.

As to quaternary structure, homodimer; disulfide-linked. In brain, present in the granule layer of the cerebellar cortex. Localizes on the post-synaptic side of glutamatergic mossy fibers and granule cells in the cerebellum (at protein level). As to expression, predominantly expressed in granule cells in cerebellum (at protein level).

The protein resides in the cell projection. Its subcellular location is the dendrite. It is found in the perikaryon. It localises to the cell membrane. Functionally, voltage-sensor protein present on the post-synaptic side of glutamatergic mossy fibers and granule cells in the cerebellum. Despite the presence of a voltage-sensor segment, does not form a functional ion channel and its precise role remains unclear. Undergoes both rapid and slow structural rearrangements in response to changes in voltage. Contains a zinc-binding site that can regulate the slow conformational transition. The chain is Transmembrane protein 266 from Mus musculus (Mouse).